A 345-amino-acid chain; its full sequence is Histidinol-phosphate aminotransferase (345 aa).

K206 is subject to N6-(pyridoxal phosphate)lysine.

It belongs to the class-II pyridoxal-phosphate-dependent aminotransferase family. Histidinol-phosphate aminotransferase subfamily. Homodimer. It depends on pyridoxal 5'-phosphate as a cofactor.

The catalysed reaction is L-histidinol phosphate + 2-oxoglutarate = 3-(imidazol-4-yl)-2-oxopropyl phosphate + L-glutamate. Its pathway is amino-acid biosynthesis; L-histidine biosynthesis; L-histidine from 5-phospho-alpha-D-ribose 1-diphosphate: step 7/9. The chain is Histidinol-phosphate aminotransferase from Bacteroides fragilis (strain YCH46).